A 341-amino-acid chain; its full sequence is RNA 3'-terminal phosphate cyclase (341 aa).

ATP-binding positions include glutamine 102 and 283 to 287 (HLADQ). Histidine 308 acts as the Tele-AMP-histidine intermediate in catalysis.

The protein belongs to the RNA 3'-terminal cyclase family. Type 1 subfamily.

The protein resides in the cytoplasm. The enzyme catalyses a 3'-end 3'-phospho-ribonucleotide-RNA + ATP = a 3'-end 2',3'-cyclophospho-ribonucleotide-RNA + AMP + diphosphate. Its function is as follows. Catalyzes the conversion of 3'-phosphate to a 2',3'-cyclic phosphodiester at the end of RNA. The mechanism of action of the enzyme occurs in 3 steps: (A) adenylation of the enzyme by ATP; (B) transfer of adenylate to an RNA-N3'P to produce RNA-N3'PP5'A; (C) and attack of the adjacent 2'-hydroxyl on the 3'-phosphorus in the diester linkage to produce the cyclic end product. The biological role of this enzyme is unknown but it is likely to function in some aspects of cellular RNA processing. The sequence is that of RNA 3'-terminal phosphate cyclase from Pseudomonas aeruginosa (strain UCBPP-PA14).